Here is a 303-residue protein sequence, read N- to C-terminus: Agmatinase (303 aa).

6 residues coordinate Mn(2+): H126, D149, H151, D153, D230, and D232.

It belongs to the arginase family. Agmatinase subfamily. Mn(2+) serves as cofactor.

It catalyses the reaction agmatine + H2O = urea + putrescine. Functionally, catalyzes the formation of putrescine from agmatine. This Blochmanniella floridana protein is Agmatinase (speB).